Reading from the N-terminus, the 111-residue chain is Small ribosomal subunit protein bS6 (111 aa).

Belongs to the bacterial ribosomal protein bS6 family.

In terms of biological role, binds together with bS18 to 16S ribosomal RNA. The protein is Small ribosomal subunit protein bS6 of Francisella tularensis subsp. tularensis (strain FSC 198).